The chain runs to 426 residues: Endoglucanase Z (426 aa).

The N-terminal stretch at 1 to 43 (MPLSYLDKNPVIDSKKHALRKKLFLSCAYFGLSLACLSSNAWA) is a signal peptide. Positions 44-332 (SVEPLSVNGN…VKSIIQSWPY (289 aa)) are catalytic. Glu176 acts as the Proton donor in catalysis. Glu263 serves as the catalytic Nucleophile. The tract at residues 333-366 (KAGSAASATTDPSTDTTTDTTVDEPTTTDTPATA) is linker. A disordered region spans residues 336–367 (SAASATTDPSTDTTTDTTVDEPTTTDTPATAD). The interval 367–426 (DCANANVYPNWVSKDWAGGQPTHNEAGQSIVYKGNLYTANWYTASVPGSDSSWTQVGSCN) is cellulose-binding. A disulfide bond links Cys368 and Cys425.

The protein belongs to the glycosyl hydrolase 5 (cellulase A) family.

Its subcellular location is the secreted. It catalyses the reaction Endohydrolysis of (1-&gt;4)-beta-D-glucosidic linkages in cellulose, lichenin and cereal beta-D-glucans.. Represents 97% of the global cellulase activity. In Dickeya dadantii (strain 3937) (Erwinia chrysanthemi (strain 3937)), this protein is Endoglucanase Z (celZ).